Consider the following 117-residue polypeptide: Immunoglobulin kappa variable 1-39 (117 aa).

The N-terminal stretch at 1–22 (MDMRVPAQLLGLLLLWLRGARC) is a signal peptide. Positions 23-45 (DIQMTQSPSSLSASVGDRVTITC) are framework-1. In terms of domain architecture, Ig-like spans 24–117 (IQMTQSPSSL…YYCQQSYSTP (94 aa)). Cys-45 and Cys-110 are disulfide-bonded. The interval 46-56 (RASQSISSYLN) is complementarity-determining-1. Residues 57–71 (WYQQKPGKAPKLLIY) form a framework-2 region. Residues 72 to 78 (AASSLQS) are complementarity-determining-2. The tract at residues 79 to 110 (GVPSRFSGSGSGTDFTLTISSLQPEDFATYYC) is framework-3. Residues 111–117 (QQSYSTP) are complementarity-determining-3.

Immunoglobulins are composed of two identical heavy chains and two identical light chains; disulfide-linked.

The protein localises to the secreted. Its subcellular location is the cell membrane. Its function is as follows. V region of the variable domain of immunoglobulin light chains that participates in the antigen recognition. Immunoglobulins, also known as antibodies, are membrane-bound or secreted glycoproteins produced by B lymphocytes. In the recognition phase of humoral immunity, the membrane-bound immunoglobulins serve as receptors which, upon binding of a specific antigen, trigger the clonal expansion and differentiation of B lymphocytes into immunoglobulins-secreting plasma cells. Secreted immunoglobulins mediate the effector phase of humoral immunity, which results in the elimination of bound antigens. The antigen binding site is formed by the variable domain of one heavy chain, together with that of its associated light chain. Thus, each immunoglobulin has two antigen binding sites with remarkable affinity for a particular antigen. The variable domains are assembled by a process called V-(D)-J rearrangement and can then be subjected to somatic hypermutations which, after exposure to antigen and selection, allow affinity maturation for a particular antigen. The chain is Immunoglobulin kappa variable 1-39 from Homo sapiens (Human).